The primary structure comprises 438 residues: EF-hand calcium-binding domain-containing protein 3 (438 aa).

2 EF-hand domains span residues 47–82 (SQMAAFQDAYNFFYKDKTGCIDFHGLMCTVAKLGMN) and 83–118 (LTKHDVYNELKCADIDRDGKVNFSDFIKVLTDKNLF). Ca(2+) contacts are provided by Asp96, Asp98, Asp100, Lys102, and Asp107. Tyr279 is modified (phosphotyrosine). The segment covering 405–415 (SSHNSRSSSSS) has biased composition (low complexity). Residues 405–438 (SSHNSRSSSSSDTSECYTDSGRKRKRKGLKGFQQ) form a disordered region. Over residues 426-438 (RKRKRKGLKGFQQ) the composition is skewed to basic residues.

In Homo sapiens (Human), this protein is EF-hand calcium-binding domain-containing protein 3 (EFCAB3).